We begin with the raw amino-acid sequence, 274 residues long: N-acetylmuramic acid 6-phosphate etherase (274 aa).

An SIS domain is found at 52–215 (IIPRMEQGGR…STSIMIRLGR (164 aa)). Residue Glu-80 is the Proton donor of the active site. Glu-111 is a catalytic residue.

The protein belongs to the GCKR-like family. MurNAc-6-P etherase subfamily. Homodimer.

The catalysed reaction is N-acetyl-D-muramate 6-phosphate + H2O = N-acetyl-D-glucosamine 6-phosphate + (R)-lactate. It functions in the pathway amino-sugar metabolism; N-acetylmuramate degradation. Specifically catalyzes the cleavage of the D-lactyl ether substituent of MurNAc 6-phosphate, producing GlcNAc 6-phosphate and D-lactate. The protein is N-acetylmuramic acid 6-phosphate etherase of Porphyromonas gingivalis (strain ATCC BAA-308 / W83).